A 564-amino-acid chain; its full sequence is Urease subunit alpha (564 aa).

A Urease domain is found at 126–564; that stretch reads GGIDTHIHFI…LPMAQRYFLF (439 aa). Positions 131, 133, and 214 each coordinate Ni(2+). K214 carries the post-translational modification N6-carboxylysine. Substrate is bound at residue H216. Ni(2+) contacts are provided by H243 and H269. H317 functions as the Proton donor in the catalytic mechanism. D357 lines the Ni(2+) pocket.

Belongs to the metallo-dependent hydrolases superfamily. Urease alpha subunit family. As to quaternary structure, heterotrimer of UreA (gamma), UreB (beta) and UreC (alpha) subunits. Three heterotrimers associate to form the active enzyme. Ni cation serves as cofactor. In terms of processing, carboxylation allows a single lysine to coordinate two nickel ions.

The protein localises to the cytoplasm. It catalyses the reaction urea + 2 H2O + H(+) = hydrogencarbonate + 2 NH4(+). The protein operates within nitrogen metabolism; urea degradation; CO(2) and NH(3) from urea (urease route): step 1/1. This chain is Urease subunit alpha, found in Burkholderia thailandensis (strain ATCC 700388 / DSM 13276 / CCUG 48851 / CIP 106301 / E264).